Consider the following 88-residue polypeptide: MARMVFCVKLNKEAEGMKFPPLPNELGKRIFENVSQEAWAAWTRHQTMLINENRLSLADPRAREYLAQQMEQYFFGDGADAVQGYVPQ.

Belongs to the Fe(2+)-trafficking protein family.

Its function is as follows. Could be a mediator in iron transactions between iron acquisition and iron-requiring processes, such as synthesis and/or repair of Fe-S clusters in biosynthetic enzymes. The polypeptide is Probable Fe(2+)-trafficking protein (Neisseria gonorrhoeae (strain ATCC 700825 / FA 1090)).